Consider the following 260-residue polypeptide: Tropinone reductase homolog At1g07450 (260 aa).

Residue 14 to 38 participates in NADP(+) binding; the sequence is LVTGGSKGIGYAIVEELVGFGARVH. A substrate-binding site is contributed by Ser-147. Tyr-159 functions as the Proton acceptor in the catalytic mechanism.

This sequence belongs to the short-chain dehydrogenases/reductases (SDR) family. SDR65C subfamily.

The chain is Tropinone reductase homolog At1g07450 from Arabidopsis thaliana (Mouse-ear cress).